The sequence spans 493 residues: Transcript termination protein A18 (493 aa).

One can recognise a Helicase ATP-binding domain in the interval 100 to 256 (MIESKRPLYI…NSIINIAKLS (157 aa)). Position 113–120 (113–120 (LACGFGKT)) interacts with ATP. Positions 206 to 209 (DESH) match the DESH box motif.

The protein belongs to the helicase family. Poxviruses subfamily. Interacts with G2. Might be part of a transcription complex composed at least of G2, A18, and H5.

It localises to the virion. In terms of biological role, DNA helicase which seems to act as a postreplicative transcription termination factor. Involved in ATP-dependent release of nascent RNA. Forms a stable complex with single-stranded DNA, and to a lesser extent RNA. The chain is Transcript termination protein A18 from Vaccinia virus (strain Tian Tan) (VACV).